A 360-amino-acid polypeptide reads, in one-letter code: Phospho-N-acetylmuramoyl-pentapeptide-transferase (360 aa).

10 helical membrane passes run 18–38, 73–93, 97–117, 134–154, 168–188, 199–219, 236–256, 263–283, 288–308, and 338–358; these read VFSY…VFSL, TMGG…WGDL, YVLV…IDDY, YILQ…SSTL, VMPQ…VGAS, GLAI…AYLS, AGEL…FLWF, VFMG…IAVL, ILLV…ILQV, and VIVR…ATLK.

Belongs to the glycosyltransferase 4 family. MraY subfamily. The cofactor is Mg(2+).

Its subcellular location is the cell inner membrane. It catalyses the reaction UDP-N-acetyl-alpha-D-muramoyl-L-alanyl-gamma-D-glutamyl-meso-2,6-diaminopimeloyl-D-alanyl-D-alanine + di-trans,octa-cis-undecaprenyl phosphate = di-trans,octa-cis-undecaprenyl diphospho-N-acetyl-alpha-D-muramoyl-L-alanyl-D-glutamyl-meso-2,6-diaminopimeloyl-D-alanyl-D-alanine + UMP. The protein operates within cell wall biogenesis; peptidoglycan biosynthesis. Functionally, catalyzes the initial step of the lipid cycle reactions in the biosynthesis of the cell wall peptidoglycan: transfers peptidoglycan precursor phospho-MurNAc-pentapeptide from UDP-MurNAc-pentapeptide onto the lipid carrier undecaprenyl phosphate, yielding undecaprenyl-pyrophosphoryl-MurNAc-pentapeptide, known as lipid I. The protein is Phospho-N-acetylmuramoyl-pentapeptide-transferase of Shewanella denitrificans (strain OS217 / ATCC BAA-1090 / DSM 15013).